The primary structure comprises 290 residues: Fructose-1,6-bisphosphatase class 1 (290 aa).

Positions 78, 96, 98, and 99 each coordinate Mg(2+). Substrate-binding positions include 99–102, tyrosine 201, and lysine 226; that span reads DGSS. Glutamate 232 contacts Mg(2+).

Belongs to the FBPase class 1 family. In terms of assembly, homotetramer. It depends on Mg(2+) as a cofactor.

The protein resides in the cytoplasm. The catalysed reaction is beta-D-fructose 1,6-bisphosphate + H2O = beta-D-fructose 6-phosphate + phosphate. It participates in carbohydrate biosynthesis; gluconeogenesis. In Helicobacter pylori (strain ATCC 700392 / 26695) (Campylobacter pylori), this protein is Fructose-1,6-bisphosphatase class 1.